Consider the following 149-residue polypeptide: MKVILLRDVPKIGKKGEIKEVSDGYARNYLIPRGFAKEYTEGLERAIKHEKEIEKRKKEREREESEKILKELKKRTHVVKVKAGEGGKIFGAVTAATLAEEISKTTGLKLDKRWFKLDKPIKELGEYSLEVNLPGGVKDTIKIKVEREE.

This sequence belongs to the bacterial ribosomal protein bL9 family.

In terms of biological role, binds to the 23S rRNA. This is Large ribosomal subunit protein bL9 from Thermotoga petrophila (strain ATCC BAA-488 / DSM 13995 / JCM 10881 / RKU-1).